The primary structure comprises 397 residues: MLAQSCCLRLLILLLLFTTIGSVPKKSLKYFTNRKLRERRIKLFGTKKTEIQSLLISTWNYTDANLQAWSVLQQGPRRTRQAVIQGCMACQNQRCGRLLTGRSSPDTEGALTLEAAIMDGESLEYGAVAGMNGVRNAILVADAVLKYTKHSVLVGKSATKFARSLGYKEEYLTDARTRNVLKKWRSNGCQPNFWRDVHPSPAENCGPYSPLPEHMHQHPMHQEYAIIQGQHDQLAFLALDAEGKFHVASQSSGAQFRIPGRVGDSAVPGAGIYADNEVGGAVASGDGDVLMRHLPAFLAVEAMRAGKEPDKAAELVVQRLLRHNTEFNGAVVVVNRRGIYAAACAGLDEFHFVVSGGKEYLSMARVERVKCLERENEVIDGGPKGLFPTIPEKHKVP.

The signal sequence occupies residues 1–22; that stretch reads MLAQSCCLRLLILLLLFTTIGS. Cystine bridges form between C90–C95, C189–C205, and C344–C371.

The protein belongs to the Ntn-hydrolase family.

The chain is L-asparaginase-like protein CG4372 from Drosophila melanogaster (Fruit fly).